The primary structure comprises 163 residues: Single-stranded DNA-binding protein 1 (163 aa).

Positions 1-104 (MINNVVLVGR…VVAESFQLLE (104 aa)) constitute an SSB domain. The tract at residues 106-163 (RATREGGSPNSYNNGGYNNAPSNNSYSASSQQTPNFSRDESPFGNSNPMDISDDDLPF) is disordered. Low complexity predominate over residues 111 to 135 (GGSPNSYNNGGYNNAPSNNSYSASS). An Important for interaction with partner proteins motif is present at residues 158-163 (DDDLPF).

In terms of assembly, homotetramer.

Its function is as follows. Plays an important role in DNA replication, recombination and repair. Binds to ssDNA and to an array of partner proteins to recruit them to their sites of action during DNA metabolism. The polypeptide is Single-stranded DNA-binding protein 1 (ssb1) (Streptococcus agalactiae serotype III (strain NEM316)).